We begin with the raw amino-acid sequence, 185 residues long: MAQQCFHSEYFDSLLHACKPCHLRCSNPPATCQPYCDPSVTSSVKGTYTVLWIFLGLTLVLSLALFTISFLLRKMNPEALKDEPQSPGQLDGSAQLDKADTELTRIRAGDDRIFPRSLEYTVEECTCEDCVKSKPKGDSDHFFPLPAMEEGATILVTTKTGDYGKSSVPTALQSVMGMEKPTHTR.

Residues 1–49 are Extracellular-facing; sequence MAQQCFHSEYFDSLLHACKPCHLRCSNPPATCQPYCDPSVTSSVKGTYT. The TNFR-Cys repeat unit spans residues 4–36; the sequence is QCFHSEYFDSLLHACKPCHLRCSNPPATCQPYC. 3 disulfides stabilise this stretch: Cys5-Cys18, Cys21-Cys32, and Cys25-Cys36. Residues 50 to 70 form a helical; Signal-anchor for type III membrane protein membrane-spanning segment; the sequence is VLWIFLGLTLVLSLALFTISF. Residues 71–185 are Cytoplasmic-facing; that stretch reads LLRKMNPEAL…MGMEKPTHTR (115 aa).

In terms of assembly, associates with TRAF1, TRAF2, TRAF3, TRAF5 and TRAF6. Detected in spleen, thymus, bone marrow and heart, and at lower levels in kidney and lung.

The protein localises to the membrane. In terms of biological role, receptor for TNFSF13B/BLyS/BAFF and TNFSF13/APRIL. Promotes B-cell survival and plays a role in the regulation of humoral immunity. Activates NF-kappa-B and JNK. The protein is Tumor necrosis factor receptor superfamily member 17 (Tnfrsf17) of Mus musculus (Mouse).